We begin with the raw amino-acid sequence, 246 residues long: Dihydroorotate dehydrogenase B (NAD(+)), electron transfer subunit (246 aa).

In terms of domain architecture, FAD-binding FR-type spans 3-97; the sequence is EKYTVEKVYE…TGPLGNGFNV (95 aa). Residues 50-53 and 72-73 contribute to the FAD site; these read RPIS and GT. [2Fe-2S] cluster contacts are provided by Cys-211, Cys-216, Cys-219, and Cys-231.

It belongs to the PyrK family. As to quaternary structure, heterotetramer of 2 PyrK and 2 PyrD type B subunits. It depends on [2Fe-2S] cluster as a cofactor. The cofactor is FAD.

Its pathway is pyrimidine metabolism; UMP biosynthesis via de novo pathway; orotate from (S)-dihydroorotate (NAD(+) route): step 1/1. Responsible for channeling the electrons from the oxidation of dihydroorotate from the FMN redox center in the PyrD type B subunit to the ultimate electron acceptor NAD(+). In Clostridium acetobutylicum (strain ATCC 824 / DSM 792 / JCM 1419 / IAM 19013 / LMG 5710 / NBRC 13948 / NRRL B-527 / VKM B-1787 / 2291 / W), this protein is Dihydroorotate dehydrogenase B (NAD(+)), electron transfer subunit.